Reading from the N-terminus, the 965-residue chain is Meiosis-specific coiled-coil domain-containing protein MEIOC (965 aa).

2 disordered regions span residues 1–22 (MEVS…EGPE) and 946–965 (VHES…TSKH). Over residues 949–965 (SINSSNPMNQRGETSKH) the composition is skewed to polar residues.

In terms of assembly, interacts with YTHDC2; binds transcripts that regulate the mitotic cell cycle inhibiting progression into metaphase, thereby allowing meiotic prophase to proceed normally. Interacts with RBM46. In terms of tissue distribution, expressed specifically in fetal ovary and postnatal and adult testes (at protein level). In adult testis expressed in spermatocytes, beginning in preleptotene and extending through most stages of meiotic prophase I, including leptotene, zygotene, and pachytene.

It is found in the cytoplasm. The protein resides in the nucleus. Is required for meiosis completion in both male and female germ cells. Confers stability to numerous meiotic mRNAs in gonads allowing proper initiation and progression into meiosis prophase I. The function may involve YTHDC2 and is independent of induction by retinoic acid (RA). Maintains an extended meiotic prophase I by properly promoting the transition from a mitotic to a meiotic cell cycle program by binding transcripts through its interaction with YTHDC2 that regulate the mitotic cell cycle. The chain is Meiosis-specific coiled-coil domain-containing protein MEIOC from Mus musculus (Mouse).